Reading from the N-terminus, the 61-residue chain is Insect toxin BsIT2 (61 aa).

One can recognise an LCN-type CS-alpha/beta domain in the interval 1-61; it reads DGYIKKSKGC…RWKYETKTCK (61 aa). 4 disulfides stabilise this stretch: C10–C60, C14–C35, C21–C42, and C25–C44.

Belongs to the long (4 C-C) scorpion toxin superfamily. Sodium channel inhibitor family. Beta subfamily. In terms of tissue distribution, expressed by the venom gland.

It is found in the secreted. In terms of biological role, depressant insect beta-toxins cause a transient contraction paralysis followed by a slow flaccid paralysis. They bind voltage-independently at site-4 of sodium channels (Nav) and shift the voltage of activation toward more negative potentials thereby affecting sodium channel activation and promoting spontaneous and repetitive firing. This toxin is active only on insects. The polypeptide is Insect toxin BsIT2 (Hottentotta tamulus sindicus (Scorpion)).